The following is a 788-amino-acid chain: Cadherin-10 (788 aa).

The N-terminal stretch at 1-22 (MTIHQFLLLFLFWVCLPHFCSP) is a signal peptide. The propeptide occupies 23 to 54 (EIMFRRTPVPQQRILSSRVPRSDGKILHRQKR). 5 consecutive Cadherin domains span residues 55–160 (GWMW…EPTF), 161–269 (PEEI…PPRF), 270–384 (PQNT…PPVF), 385–487 (SRSS…DNAP), and 488–606 (QFAV…LLLP). Residues 55–613 (GWMWNQFFLL…LLPAGLSTGA (559 aa)) lie on the Extracellular side of the membrane. Asparagine 256 is a glycosylation site (N-linked (GlcNAc...) asparagine). 3 N-linked (GlcNAc...) asparagine glycosylation sites follow: asparagine 438, asparagine 456, and asparagine 534. The chain crosses the membrane as a helical span at residues 614 to 634 (LIAILLCIIILLVIVVLFAAL). Over 635 to 788 (KRQRKKEPLI…YGGGESDKDS (154 aa)) the chain is Cytoplasmic. 2 positions are modified to phosphoserine: serine 784 and serine 788.

In terms of tissue distribution, predominantly expressed in brain. Also found in adult and fetal kidney. Very low levels detected in prostate and fetal lung.

The protein resides in the cell membrane. Functionally, cadherins are calcium-dependent cell adhesion proteins. They preferentially interact with themselves in a homophilic manner in connecting cells; cadherins may thus contribute to the sorting of heterogeneous cell types. This Homo sapiens (Human) protein is Cadherin-10 (CDH10).